A 246-amino-acid chain; its full sequence is Apolipoprotein L domain-containing protein 1 (246 aa).

2 helical membrane passes run 50–72 and 89–109; these read SLAA…IVGL and GLGV…SLIF. Positions 193–220 form a coiled coil; that stretch reads LKAKIQKLSESLESCTGALDELSEQLES.

This sequence belongs to the apolipoprotein L family. As to expression, present at low levels in brain vascular cells (at protein level).

The protein localises to the cell membrane. Its subcellular location is the cell junction. It localises to the cytoplasmic vesicle. The protein resides in the secretory vesicle. Is a modulator of endothelial barrier permeability, required for proper organization of endothelial cell-cell junctions and cytoskeleton. It also plays a role in the modulation of secretory autophagy. May affect blood-brain barrier permeability. This is Apolipoprotein L domain-containing protein 1 (Apold1) from Rattus norvegicus (Rat).